Here is a 33-residue protein sequence, read N- to C-terminus: Neutrophil defensin 4 (33 aa).

Disulfide bonds link C3/C31, C5/C20, and C10/C30.

The protein belongs to the alpha-defensin family. Post-translationally, HANP-2 could be a product of proteolytic N-terminal amino acid removal from HANP-4.

It localises to the secreted. Functionally, bactericidal activity, greater against Gram-positive bacteria. Low anti-fungi activity. The sequence is that of Neutrophil defensin 4 from Mesocricetus auratus (Golden hamster).